The following is a 46-amino-acid chain: U1-plectoxin-Pt1f (46 aa).

5 disulfide bridges follow: Cys-4–Cys-18, Cys-11–Cys-24, Cys-17–Cys-35, Cys-21–Cys-44, and Cys-26–Cys-33.

It belongs to the neurotoxin 02 (plectoxin) family. 02 (plectoxin) subfamily. As to expression, expressed by the venom gland.

The protein localises to the secreted. Functionally, potent toxin that may paralyze and/or kill insect pests such as H.virescens (lepidoptera), S.exigua (beet armyworm) and M.sexta (tobacco hornworm). This Plectreurys tristis (Spider) protein is U1-plectoxin-Pt1f.